Consider the following 88-residue polypeptide: UPF0237 protein SMU_72 (88 aa).

In terms of domain architecture, ACT spans 4–77; the sequence is IITVVGKDRT…ETLNVKINIQ (74 aa).

Belongs to the UPF0237 family. Homodimer.

The chain is UPF0237 protein SMU_72 from Streptococcus mutans serotype c (strain ATCC 700610 / UA159).